We begin with the raw amino-acid sequence, 1067 residues long: Myocardin-related transcription factor B (1067 aa).

3 RPEL repeats span residues 46–71 (EVLQLRLQQRRTREQLVDQGIMPPLK), 90–115 (NFLKHKIRSRPNRSELVRMHILEETL), and 134–159 (DDLNEKIAQRPGPLELVEKNILPVDL). 2 disordered regions span residues 175–223 (NLDT…NTTI) and 249–286 (PLSCIVSKPGPALIKQTQPKHTEKPRSKKSKDPKPRVK). Composition is skewed to polar residues over residues 193–203 (QPASQESQGSA) and 212–223 (SDSSSPVSNTTI). Positions 268 to 283 (KHTEKPRSKKSKDPKP) are enriched in basic and acidic residues. The SAP domain occupies 390–424 (LDDMKVAELKMELKLRGLPVSGTKMDLIERLKPFQ). Residues 540 to 594 (GNTPNVELDAVEKDRKLQEKEKQIEELKRKLEQEQKLVEVLKKQLELEKRGQQQQ) adopt a coiled-coil conformation. Over residues 799 to 819 (ISTSAQPQRSTQLTAVQNGPT) the composition is skewed to polar residues. The tract at residues 799 to 829 (ISTSAQPQRSTQLTAVQNGPTSLHEKSSTPP) is disordered.

Interacts with SRF.

The protein localises to the nucleus. Its function is as follows. Poor transcriptional factor which uses the canonical single or multiple CArG boxes DNA sequence. Acts as a cofactor of serum response factor (SRF) with the potential to modulate SRF target genes. This is Myocardin-related transcription factor B (mrtfb) from Xenopus laevis (African clawed frog).